The primary structure comprises 55 residues: Hydrophobic protein LTI6B (55 aa).

Helical transmembrane passes span 8–28 (IDIL…FGCG) and 31–51 (FWIC…YAIY).

It belongs to the UPF0057 (PMP3) family.

The protein resides in the membrane. Functionally, plays a role in the regulation of membrane potential. Could mediate a proton leak. This is Hydrophobic protein LTI6B (LTI6B) from Oryza sativa subsp. indica (Rice).